The following is a 217-amino-acid chain: Killer cell lectin-like receptor subfamily B member 1F (217 aa).

The Cytoplasmic portion of the chain corresponds to 1–45 (MDTSKVHGNVKPFRCPGYKQASSPSFSPDACRCPHWHHLALKSGC). The LCK-binding motif motif lies at 31–34 (CRCP). A helical; Signal-anchor for type II membrane protein membrane pass occupies residues 46–66 (AGLILLLLSLIGLSVLVRFLV). Residues 67-217 (QKPPIEKCSV…WICQKTLIHV (151 aa)) are Extracellular-facing. N81 carries an N-linked (GlcNAc...) asparagine glycan. Positions 101–211 (HWNKCLFVSQ…CSSDNHWICQ (111 aa)) constitute a C-type lectin domain. 2 disulfide bridges follow: C122–C210 and C189–C202.

In terms of tissue distribution, highly expressed in dendritic cells. Detectable in natural killer cells.

Its subcellular location is the membrane. Functionally, binds CLEC2I/Clr-g leading to activation of natural killer cells or costimulation of IL-2 production and proliferation of T-cells in response to antigen stimulation. May contribute to the formation of the immunological synapse between T-cells and antigen-presenting dendritic cells. The sequence is that of Killer cell lectin-like receptor subfamily B member 1F (Klrb1f) from Mus musculus (Mouse).